A 563-amino-acid chain; its full sequence is MVDNIQIVEALNAVLTDLTLQEISEKLEAPKSSDLGDVAFPTFTLAKTLHKAPQLIAADIVAAIDQEGFEKVVATGPYVNFFLDKVATSNQVLKTVFDLEGAYGDNVDGQGAKVTIDMSSPNIAKPMSMGHLRSTVIGNALANITAKNGYAPVKINHLGDWGTQFGKLIYAYKAWGSEEEVKSDPIATLLKYYVEFHEKAKENDSLNDEGRAWFKKLEDGDEEAHRLWQWFRAESLKEFSEIYDRLDITFDSFNGEAFYNDKMDKVVDLLEEKNLLVESQGAQIVDLSHINPNLTPAMIKRSDGATLYMTRDLAAALYRKETYDFAKSLYVVGGEQREHFVQMKAVLSLMGFEWSDDIEHIAFGLITFNGKKMSTRKGDVVLLKDVLDDAHELALKQIQEKNPDLGDKDTVAEEVGAGAVVFHDLMNDRTNNFDFNLEEVVRFEGDTGPYVQYTNARAKSILRKTSVQLTSDDLNLTDPATWDIITTLNNFPKTVQRAWQQREASIIAKYALNLSRAFNKYYANSKILTEDVQLNARLVLVKSVSIVLTESLRLLGVKAPEEM.

Positions 121–131 (PNIAKPMSMGH) match the 'HIGH' region motif.

This sequence belongs to the class-I aminoacyl-tRNA synthetase family. Monomer.

Its subcellular location is the cytoplasm. It carries out the reaction tRNA(Arg) + L-arginine + ATP = L-arginyl-tRNA(Arg) + AMP + diphosphate. The chain is Arginine--tRNA ligase from Leuconostoc mesenteroides subsp. mesenteroides (strain ATCC 8293 / DSM 20343 / BCRC 11652 / CCM 1803 / JCM 6124 / NCDO 523 / NBRC 100496 / NCIMB 8023 / NCTC 12954 / NRRL B-1118 / 37Y).